The primary structure comprises 416 residues: E3 ubiquitin-protein ligase makorin-2 (416 aa).

C3H1-type zinc fingers lie at residues 2-29 (STKQ…HDLA) and 31-58 (SKPS…HTKP). The tract at residues 61-144 (AAGGAVGPAP…DPQTSPEMKP (84 aa)) is disordered. Residues 95-123 (HSNEPGKREKKTLVLRDRNLTGLAEDKTP) show a composition bias toward basic and acidic residues. The residue at position 139 (serine 139) is a Phosphoserine. The segment at 165-192 (SNEPQLCPYAAAGECRFGDACVYLHGDM) adopts a C3H1-type 3 zinc-finger fold. Positions 193 to 222 (CEICRLQVLHPFDPEQRKAHEKMCMSTFEH) are makorin-type Cys-His. An RING-type zinc finger spans residues 238–292 (CSICMEVILEKASASERRFGILSNCSHTYCLSCIRQWRCAKQFENPIIKSCPECR). The C3H1-type 4 zinc finger occupies 321-350 (GMGKKACKYFEQGKGTCPFGSKCLYRHAYP).

In terms of assembly, interacts with PDLIM2 (via LIM zinc-binding domain). Interacts with RELA. Highly expressed in the testis, and lower expression in the brain, thymus, heart, lung, liver, spleen, kidney, ovary, uterus, and seminal vesicle (at protein level). Expressed in primary immune cells, such as CD4-positive and CD8-positive T cells, CD19-positive B cells and CD11c-positive dendritic cells, and in embryonic fibroblasts (at protein level).

The protein localises to the cytoplasm. It is found in the nucleus. The enzyme catalyses S-ubiquitinyl-[E2 ubiquitin-conjugating enzyme]-L-cysteine + [acceptor protein]-L-lysine = [E2 ubiquitin-conjugating enzyme]-L-cysteine + N(6)-ubiquitinyl-[acceptor protein]-L-lysine.. Its pathway is protein modification; protein ubiquitination. E3 ubiquitin ligase catalyzing the covalent attachment of ubiquitin moieties onto substrate proteins. Promotes the polyubiquitination and proteasome-dependent degradation of RELA/p65, thereby suppressing RELA-mediated NF-kappa-B transactivation and negatively regulating inflammatory responses. Plays a role in the regulation of spermiation and in male fertility. This chain is E3 ubiquitin-protein ligase makorin-2 (Mkrn2), found in Mus musculus (Mouse).